A 457-amino-acid chain; its full sequence is Siroheme synthase (457 aa).

Residues 1–204 (MDHLPIFCQL…ADEKAVNATT (204 aa)) form a precorrin-2 dehydrogenase /sirohydrochlorin ferrochelatase region. NAD(+)-binding positions include 22 to 23 (DV) and 43 to 44 (LT). Serine 128 carries the post-translational modification Phosphoserine. Positions 216–457 (GEVVLVGAGP…RDKLNWFSNH (242 aa)) are uroporphyrinogen-III C-methyltransferase. Proline 225 is an S-adenosyl-L-methionine binding site. Residue aspartate 248 is the Proton acceptor of the active site. The active-site Proton donor is the lysine 270. S-adenosyl-L-methionine is bound by residues 301–303 (GGD), isoleucine 306, 331–332 (TA), methionine 382, and glycine 411.

In the N-terminal section; belongs to the precorrin-2 dehydrogenase / sirohydrochlorin ferrochelatase family. It in the C-terminal section; belongs to the precorrin methyltransferase family.

It carries out the reaction uroporphyrinogen III + 2 S-adenosyl-L-methionine = precorrin-2 + 2 S-adenosyl-L-homocysteine + H(+). The enzyme catalyses precorrin-2 + NAD(+) = sirohydrochlorin + NADH + 2 H(+). The catalysed reaction is siroheme + 2 H(+) = sirohydrochlorin + Fe(2+). It participates in cofactor biosynthesis; adenosylcobalamin biosynthesis; precorrin-2 from uroporphyrinogen III: step 1/1. Its pathway is cofactor biosynthesis; adenosylcobalamin biosynthesis; sirohydrochlorin from precorrin-2: step 1/1. It functions in the pathway porphyrin-containing compound metabolism; siroheme biosynthesis; precorrin-2 from uroporphyrinogen III: step 1/1. The protein operates within porphyrin-containing compound metabolism; siroheme biosynthesis; siroheme from sirohydrochlorin: step 1/1. It participates in porphyrin-containing compound metabolism; siroheme biosynthesis; sirohydrochlorin from precorrin-2: step 1/1. Functionally, multifunctional enzyme that catalyzes the SAM-dependent methylations of uroporphyrinogen III at position C-2 and C-7 to form precorrin-2 via precorrin-1. Then it catalyzes the NAD-dependent ring dehydrogenation of precorrin-2 to yield sirohydrochlorin. Finally, it catalyzes the ferrochelation of sirohydrochlorin to yield siroheme. In Salmonella schwarzengrund (strain CVM19633), this protein is Siroheme synthase.